The primary structure comprises 98 residues: Omega-hexatoxin-Hr2b (98 aa).

A signal peptide spans 1–22; that stretch reads MKFSKLSLTLALILTQVLFVLC. The propeptide occupies 24-56; it reads KINEDFMKHGLESQALHDEIRKPIDSENPDTER. Intrachain disulfides connect C60–C74, C67–C80, and C73–C85. L97 is subject to Leucine amide.

The protein belongs to the neurotoxin 15 family. 02 (omega-actx) subfamily. Expressed by the venom gland.

The protein localises to the secreted. Potent inhibitor of insect, but not mammalian, voltage-gated calcium channels (Cav). This is Omega-hexatoxin-Hr2b from Atrax robustus (Sydney funnel-web spider).